A 303-amino-acid chain; its full sequence is Dihydroorotate dehydrogenase B (NAD(+)), catalytic subunit (303 aa).

Substrate is bound by residues Lys46, 70–74 (NAIGL), and Asn124. Position 46–47 (46–47 (KS)) interacts with FMN. FMN is bound at residue Asn124. Cys127 serves as the catalytic Nucleophile. Residues Lys163 and Ile189 each contribute to the FMN site. 190 to 191 (NS) provides a ligand contact to substrate. FMN is bound by residues Gly216, 242 to 243 (GG), and 264 to 265 (GT).

Belongs to the dihydroorotate dehydrogenase family. Type 1 subfamily. In terms of assembly, heterotetramer of 2 PyrK and 2 PyrD type B subunits. FMN serves as cofactor.

The protein localises to the cytoplasm. The enzyme catalyses (S)-dihydroorotate + NAD(+) = orotate + NADH + H(+). It participates in pyrimidine metabolism; UMP biosynthesis via de novo pathway; orotate from (S)-dihydroorotate (NAD(+) route): step 1/1. Functionally, catalyzes the conversion of dihydroorotate to orotate with NAD(+) as electron acceptor. This Methanothermobacter thermautotrophicus (strain ATCC 29096 / DSM 1053 / JCM 10044 / NBRC 100330 / Delta H) (Methanobacterium thermoautotrophicum) protein is Dihydroorotate dehydrogenase B (NAD(+)), catalytic subunit (pyrD).